We begin with the raw amino-acid sequence, 302 residues long: Glutamyl-Q tRNA(Asp) synthetase (302 aa).

Residues 13 to 17 and Asp-49 each bind L-glutamate; that span reads RFAPS. The 'HIGH' region motif lies at 16 to 26; it reads PSPTGPLHLGS. The Zn(2+) site is built by Cys-105, Cys-107, Tyr-119, and Cys-123. Residues Tyr-178 and Arg-196 each coordinate L-glutamate. The 'KMSKS' region signature appears at 234–238; that stretch reads KLSKQ. An ATP-binding site is contributed by Lys-237.

This sequence belongs to the class-I aminoacyl-tRNA synthetase family. GluQ subfamily. Requires Zn(2+) as cofactor.

Its function is as follows. Catalyzes the tRNA-independent activation of glutamate in presence of ATP and the subsequent transfer of glutamate onto a tRNA(Asp). Glutamate is transferred on the 2-amino-5-(4,5-dihydroxy-2-cyclopenten-1-yl) moiety of the queuosine in the wobble position of the QUC anticodon. The chain is Glutamyl-Q tRNA(Asp) synthetase from Methylococcus capsulatus (strain ATCC 33009 / NCIMB 11132 / Bath).